Reading from the N-terminus, the 462-residue chain is Phosphoglucosamine mutase (462 aa).

The active-site Phosphoserine intermediate is the Ser-112. Mg(2+) contacts are provided by Ser-112, Asp-250, Asp-252, and Asp-254. The residue at position 112 (Ser-112) is a Phosphoserine.

The protein belongs to the phosphohexose mutase family. It depends on Mg(2+) as a cofactor. Activated by phosphorylation.

The enzyme catalyses alpha-D-glucosamine 1-phosphate = D-glucosamine 6-phosphate. Its function is as follows. Catalyzes the conversion of glucosamine-6-phosphate to glucosamine-1-phosphate. This chain is Phosphoglucosamine mutase, found in Parasynechococcus marenigrum (strain WH8102).